The primary structure comprises 738 residues: Vesicle-fusing ATPase (738 aa).

ATP contacts are provided by residues 507 to 512 (NGIINY) and 547 to 554 (PGCGKSSL).

It belongs to the AAA ATPase family. As to quaternary structure, interacts with syn7A, snpA and snpC. Mg(2+) serves as cofactor.

The protein localises to the cytoplasmic vesicle membrane. It localises to the endosome membrane. The enzyme catalyses ATP + H2O = ADP + phosphate + H(+). Required for vesicle-mediated transport. Involved in endocytosis and endosome-endosome fusion. May be required for transport from the endoplasmic reticulum to the Golgi stack, and for the fusion of transport vesicles within the Golgi cisternae. Required for cell polarity, locomotion and chemotaxis. The protein is Vesicle-fusing ATPase (nsfA) of Dictyostelium discoideum (Social amoeba).